The following is a 453-amino-acid chain: Crh-like protein CRH11 (453 aa).

An N-terminal signal peptide occupies residues Met-1–Ala-21. Cys-24 and Cys-32 are oxidised to a cystine. Residues Lys-28 to Gln-227 form the GH16 domain. Residue Glu-119 is the Nucleophile of the active site. Catalysis depends on Glu-123, which acts as the Proton donor. The chitin site is built by Glu-123, Trp-204, and Thr-215. Disordered regions lie at residues Leu-281–Ser-343, Lys-362–Ala-397, and Gly-410–Asn-430. 3 stretches are compositionally biased toward low complexity: residues Ser-286–Ser-343, Thr-363–Ala-397, and Ala-412–Ser-425. N-linked (GlcNAc...) asparagine glycosylation occurs at Asn-290. The GPI-anchor amidated asparagine moiety is linked to residue Asn-430. Residues Gly-431 to Val-453 constitute a propeptide, removed in mature form.

It belongs to the glycosyl hydrolase 16 family. CRH1 subfamily. The GPI-anchor is attached to the protein in the endoplasmic reticulum and serves to target the protein to the cell surface. There, the glucosamine-inositol phospholipid moiety is cleaved off and the GPI-modified mannoprotein is covalently attached via its lipidless GPI glycan remnant to the 1,6-beta-glucan of the outer cell wall layer.

The protein resides in the secreted. Its subcellular location is the cell wall. It is found in the membrane. The enzyme catalyses Random endo-hydrolysis of N-acetyl-beta-D-glucosaminide (1-&gt;4)-beta-linkages in chitin and chitodextrins.. Dual chitinase/transglycosylase that plays a role in cell wall architecture. Chitinase and transglycosylase activities are coupled. Required for the polysaccharide cross-linking at the septa and the cell wall. More specifically, transfers chitin to 1,6-beta-glucan in the cell wall. Plays an important role in fungal pathogenesis via its functions in cell wall assembly and regeneration, filamentation, and adherence to host cells. The sequence is that of Crh-like protein CRH11 (CRH11) from Candida albicans (strain SC5314 / ATCC MYA-2876) (Yeast).